A 914-amino-acid polypeptide reads, in one-letter code: DENN domain-containing protein 2C (914 aa).

A disordered region spans residues phenylalanine 46–serine 98. The span at serine 56–asparagine 68 shows a compositional bias: basic and acidic residues. Position 261 is a phosphoserine (serine 261). The segment at glycine 411–arginine 446 is disordered. In terms of domain architecture, uDENN spans glutamate 480–threonine 627. Residues arginine 649–glutamate 782 enclose the cDENN domain. The 91-residue stretch at arginine 784–valine 874 folds into the dDENN domain.

In terms of biological role, guanine nucleotide exchange factor (GEF) which may activate RAB9A and RAB9B. Promotes the exchange of GDP to GTP, converting inactive GDP-bound Rab proteins into their active GTP-bound form. This Mus musculus (Mouse) protein is DENN domain-containing protein 2C (Dennd2c).